We begin with the raw amino-acid sequence, 65 residues long: Large ribosomal subunit protein bL35 (65 aa).

Belongs to the bacterial ribosomal protein bL35 family.

This is Large ribosomal subunit protein bL35 from Psychrobacter arcticus (strain DSM 17307 / VKM B-2377 / 273-4).